The primary structure comprises 498 residues: ATP synthase subunit beta, chloroplastic (498 aa).

ATP is bound at residue 172–179 (GGAGVGKT).

It belongs to the ATPase alpha/beta chains family. F-type ATPases have 2 components, CF(1) - the catalytic core - and CF(0) - the membrane proton channel. CF(1) has five subunits: alpha(3), beta(3), gamma(1), delta(1), epsilon(1). CF(0) has four main subunits: a(1), b(1), b'(1) and c(9-12).

The protein localises to the plastid. The protein resides in the chloroplast thylakoid membrane. The catalysed reaction is ATP + H2O + 4 H(+)(in) = ADP + phosphate + 5 H(+)(out). Produces ATP from ADP in the presence of a proton gradient across the membrane. The catalytic sites are hosted primarily by the beta subunits. The protein is ATP synthase subunit beta, chloroplastic of Citrus sinensis (Sweet orange).